We begin with the raw amino-acid sequence, 382 residues long: Mannitol-1-phosphate 5-dehydrogenase (382 aa).

Position 3–14 (alanine 3–glycine 14) interacts with NAD(+).

It belongs to the mannitol dehydrogenase family.

It catalyses the reaction D-mannitol 1-phosphate + NAD(+) = beta-D-fructose 6-phosphate + NADH + H(+). The sequence is that of Mannitol-1-phosphate 5-dehydrogenase from Mannheimia succiniciproducens (strain KCTC 0769BP / MBEL55E).